The chain runs to 281 residues: Formamidopyrimidine-DNA glycosylase (281 aa).

The active-site Schiff-base intermediate with DNA is Pro2. The active-site Proton donor is Glu3. The active-site Proton donor; for beta-elimination activity is the Lys58. 3 residues coordinate DNA: His100, Arg119, and Arg160. The FPG-type zinc-finger motif lies at 245 to 281 (RVYGREGAPCPTPGCTGTVQRIVQSGRSSFFCPLCQQ). Arg271 acts as the Proton donor; for delta-elimination activity in catalysis.

It belongs to the FPG family. Monomer. Requires Zn(2+) as cofactor.

The enzyme catalyses Hydrolysis of DNA containing ring-opened 7-methylguanine residues, releasing 2,6-diamino-4-hydroxy-5-(N-methyl)formamidopyrimidine.. It carries out the reaction 2'-deoxyribonucleotide-(2'-deoxyribose 5'-phosphate)-2'-deoxyribonucleotide-DNA = a 3'-end 2'-deoxyribonucleotide-(2,3-dehydro-2,3-deoxyribose 5'-phosphate)-DNA + a 5'-end 5'-phospho-2'-deoxyribonucleoside-DNA + H(+). Its function is as follows. Involved in base excision repair of DNA damaged by oxidation or by mutagenic agents. Acts as a DNA glycosylase that recognizes and removes damaged bases. Has a preference for oxidized purines, such as 7,8-dihydro-8-oxoguanine (8-oxoG). Has AP (apurinic/apyrimidinic) lyase activity and introduces nicks in the DNA strand. Cleaves the DNA backbone by beta-delta elimination to generate a single-strand break at the site of the removed base with both 3'- and 5'-phosphates. The chain is Formamidopyrimidine-DNA glycosylase from Paracoccus denitrificans (strain Pd 1222).